The following is a 135-amino-acid chain: Surface presentation of antigens protein SpaK (135 aa).

The protein belongs to the SpaK family.

Involved in a secretory pathway responsible for the surface presentation of determinants needed for the entry of Salmonella species into mammalian cells. This is Surface presentation of antigens protein SpaK (spaK) from Salmonella typhi.